Here is a 406-residue protein sequence, read N- to C-terminus: Methyltransferase cfoD (406 aa).

Positions 270 and 312 each coordinate S-adenosyl-L-methionine. The Proton acceptor role is filled by His315.

The protein belongs to the class I-like SAM-binding methyltransferase superfamily. Cation-independent O-methyltransferase family.

Its pathway is secondary metabolite biosynthesis; flavonoid biosynthesis. Functionally, methyltransferase; part of the gene cluster that mediates the biosynthesis of chlorflavonin, a fungal flavonoid with acetolactate synthase inhibitory activity. Within the pathway, cfoD is responsible for the methylation at position C3-OH of flavonoid. The pathway begins with the PKS-NRPS hybrid synthetase cfoA that uses benzoic acid or p-hydroxybenzoic acid as a starter unit with four rounds of chain elongation using malonyl-CoA to form the chalcone skeleton. Then, a new type of chalcone isomerase, cfoK, catalyzes the conversion of the chalcone into a flavanone by a histidine-mediated oxa-Michael addition mechanism. The desaturation of flavanone to flavone is catalyzed by a new type of flavone synthase, the flavin mononucleotide (FMN)-dependent oxidoreductase cfoJ. Monooxygenases cfoF, cfoG, and P450 cfoH are responsible for the hydroxylation of the flavonoid skeleton at sites C3, C8, and C2', respectively. Like cfoF, the dehydratase cfoI also plays a role in the hydroxylation of position C3. Methyltransferases cfoB, cfoC, and cfoD then catalyze the methylation of C7-OH, C8-OH, and C3-OH, respectively. Finally, the monooxygenase cfoE is responsible for the chlorination of flavonoid at position C3'. The sequence is that of Methyltransferase cfoD from Aspergillus candidus.